Consider the following 120-residue polypeptide: uncharacterized protein (120 aa).

The 117-residue stretch at 4–120 (QIGTVAVYVE…EDGNVFLLKE (117 aa)) folds into the VOC domain.

This is an uncharacterized protein from Bacillus subtilis (strain 168).